Reading from the N-terminus, the 463-residue chain is Asparagine--tRNA ligase (463 aa).

This sequence belongs to the class-II aminoacyl-tRNA synthetase family. Homodimer.

Its subcellular location is the cytoplasm. The catalysed reaction is tRNA(Asn) + L-asparagine + ATP = L-asparaginyl-tRNA(Asn) + AMP + diphosphate + H(+). The chain is Asparagine--tRNA ligase from Clostridium kluyveri (strain ATCC 8527 / DSM 555 / NBRC 12016 / NCIMB 10680 / K1).